The following is a 508-amino-acid chain: Cytochrome c-552 (508 aa).

The signal sequence occupies residues 1-23 (MNKSYKILLTGSVIAIGAMGLMA). His103 serves as a coordination point for heme c. Heme-binding residues include Cys131, Cys134, and Lys135. Heme c contacts are provided by Cys169, Cys172, His173, Cys211, Cys214, and His215. Ca(2+)-binding residues include Glu217, Tyr218, Lys274, and Gln276. Tyr218 provides a ligand contact to substrate. Residue His277 coordinates substrate. The heme c site is built by His288, Cys295, Cys298, His299, His313, Cys326, Cys329, His330, and His405. Residues 485-508 (GRLDPKTLEGMSNKSSWSQTELSQ) form a disordered region. Polar residues predominate over residues 494–508 (GMSNKSSWSQTELSQ).

This sequence belongs to the cytochrome c-552 family. Ca(2+) serves as cofactor. The cofactor is heme c.

The protein resides in the periplasm. It catalyses the reaction 6 Fe(III)-[cytochrome c] + NH4(+) + 2 H2O = 6 Fe(II)-[cytochrome c] + nitrite + 8 H(+). It participates in nitrogen metabolism; nitrate reduction (assimilation). Its function is as follows. Catalyzes the reduction of nitrite to ammonia, consuming six electrons in the process. The chain is Cytochrome c-552 from Desulfotalea psychrophila (strain LSv54 / DSM 12343).